The following is a 264-amino-acid chain: Putative hydro-lyase Psyr_0498 (264 aa).

Belongs to the D-glutamate cyclase family.

The sequence is that of Putative hydro-lyase Psyr_0498 from Pseudomonas syringae pv. syringae (strain B728a).